Reading from the N-terminus, the 364-residue chain is Long-wave-sensitive opsin 1 (364 aa).

Over 1–52 (MAHTWGPQRLAGGQPQANFEESTQGSIFTYTNSNSTRDPFEGPNYHIAPRWV) the chain is Extracellular. A glycan (O-linked (GlcNAc) serine) is linked at Ser-22. N-linked (GlcNAc...) asparagine glycosylation occurs at Asn-34. A helical transmembrane segment spans residues 53–77 (YHLTSAWMVFVVIASVFTNGLVLAA). At 78-89 (TMRFKKLRHPLN) the chain is on the cytoplasmic side. A helical transmembrane segment spans residues 90–115 (WILVNLAIADLAETIIASTISVVNQM). The Extracellular segment spans residues 116–129 (YGYFVLGHPLCVVE). Cysteines 126 and 203 form a disulfide. The helical transmembrane segment at 130-149 (GYTVSLCGITGLWSLAIISW) threads the bilayer. Topologically, residues 150–168 (ERWMVVCKPFGNVRFDAKL) are cytoplasmic. The helical transmembrane segment at 169–192 (ATAGIAFSWIWAAVWTAPPIFGWS) threads the bilayer. The Extracellular segment spans residues 193-218 (RYWPHGLKTSCGPDVFSGSSYPGVQS). A helical transmembrane segment spans residues 219-246 (YMIVLMITCCFIPLSVIILCYLQVWLAI). Topologically, residues 247-268 (RAVAKQQKESESTQKAEKEVTR) are cytoplasmic. A helical membrane pass occupies residues 269 to 292 (MVMVMIFAYCLCWGPYTFFACFAA). Topologically, residues 293–300 (AHPGYAFH) are extracellular. Residues 301–325 (PLVAALPAYFAKSATIYNPIIYVFM) traverse the membrane as a helical segment. Lys-312 bears the N6-(retinylidene)lysine mark. Over 326 to 364 (NRQFRNCILQLFGKKVDDSSELSSVSKTEASSVSSVSPA) the chain is Cytoplasmic.

This sequence belongs to the G-protein coupled receptor 1 family. Opsin subfamily. Post-translationally, phosphorylated on some or all of the serine and threonine residues present in the C-terminal region. The three color pigments are found in the cone photoreceptor cells.

It localises to the membrane. In terms of biological role, visual pigments are the light-absorbing molecules that mediate vision. They consist of an apoprotein, opsin, covalently linked to cis-retinal. The chain is Long-wave-sensitive opsin 1 (OPN1LW) from Capra hircus (Goat).